The sequence spans 350 residues: GTPase Obg (350 aa).

The region spanning 1-158 (MFIDSVKITL…RLVRLELKLI (158 aa)) is the Obg domain. The OBG-type G domain occupies 159–339 (ADVGLVGFPN…LKFMLLEEIK (181 aa)). GTP-binding positions include 165–172 (GFPNVGKS), 190–194 (FTTLT), 212–215 (DIPG), 280–283 (SKSD), and 320–322 (SSL). Residues Ser172 and Thr192 each coordinate Mg(2+).

The protein belongs to the TRAFAC class OBG-HflX-like GTPase superfamily. OBG GTPase family. As to quaternary structure, monomer. It depends on Mg(2+) as a cofactor.

It localises to the cytoplasm. An essential GTPase which binds GTP, GDP and possibly (p)ppGpp with moderate affinity, with high nucleotide exchange rates and a fairly low GTP hydrolysis rate. Plays a role in control of the cell cycle, stress response, ribosome biogenesis and in those bacteria that undergo differentiation, in morphogenesis control. This Campylobacter jejuni subsp. jejuni serotype O:2 (strain ATCC 700819 / NCTC 11168) protein is GTPase Obg.